Reading from the N-terminus, the 206-residue chain is GTP cyclohydrolase 1 (206 aa).

Residues cysteine 95, histidine 98, and cysteine 166 each coordinate Zn(2+).

Belongs to the GTP cyclohydrolase I family. Toroid-shaped homodecamer, composed of two pentamers of five dimers.

The catalysed reaction is GTP + H2O = 7,8-dihydroneopterin 3'-triphosphate + formate + H(+). Its pathway is cofactor biosynthesis; 7,8-dihydroneopterin triphosphate biosynthesis; 7,8-dihydroneopterin triphosphate from GTP: step 1/1. This Bartonella henselae (strain ATCC 49882 / DSM 28221 / CCUG 30454 / Houston 1) (Rochalimaea henselae) protein is GTP cyclohydrolase 1.